The sequence spans 395 residues: Outer membrane protein assembly factor BamB (395 aa).

The signal sequence occupies residues 1–20 (MKSWCKNLLAAGLSLAMLSA). C21 carries N-palmitoyl cysteine lipidation. C21 is lipidated: S-diacylglycerol cysteine.

The protein belongs to the BamB family. In terms of assembly, part of the Bam complex.

The protein localises to the cell outer membrane. Part of the outer membrane protein assembly complex, which is involved in assembly and insertion of beta-barrel proteins into the outer membrane. The chain is Outer membrane protein assembly factor BamB from Shewanella oneidensis (strain ATCC 700550 / JCM 31522 / CIP 106686 / LMG 19005 / NCIMB 14063 / MR-1).